The sequence spans 382 residues: Mannitol-1-phosphate 5-dehydrogenase (382 aa).

Position 3 to 14 (3 to 14 (ALHFGAGNIGRG)) interacts with NAD(+). Lys-269 is subject to N6-acetyllysine.

Belongs to the mannitol dehydrogenase family.

It catalyses the reaction D-mannitol 1-phosphate + NAD(+) = beta-D-fructose 6-phosphate + NADH + H(+). The protein is Mannitol-1-phosphate 5-dehydrogenase of Shigella boydii serotype 18 (strain CDC 3083-94 / BS512).